The sequence spans 273 residues: NAD-dependent protein deacetylase 2 (273 aa).

The region spanning 1 to 273 is the Deacetylase sirtuin-type domain; it reads MSNAPLANQS…RCEAALAFLL (273 aa). Residues 26-46 and 104-107 each bind NAD(+); these read GAGC…GNWK and QNVD. His122 functions as the Proton acceptor in the catalytic mechanism. Cys130, Cys133, Cys181, and Cys184 together coordinate Zn(2+). NAD(+)-binding positions include 221-223, 247-249, and Cys265; these read GSS and NLG.

The protein belongs to the sirtuin family. Class II subfamily. Zn(2+) serves as cofactor.

Its subcellular location is the cytoplasm. It catalyses the reaction N(6)-acetyl-L-lysyl-[protein] + NAD(+) + H2O = 2''-O-acetyl-ADP-D-ribose + nicotinamide + L-lysyl-[protein]. NAD-dependent protein deacetylase which modulates the activities of several enzymes which are inactive in their acetylated form. The protein is NAD-dependent protein deacetylase 2 of Bradyrhizobium diazoefficiens (strain JCM 10833 / BCRC 13528 / IAM 13628 / NBRC 14792 / USDA 110).